The chain runs to 496 residues: Fusarielin biosynthesis cluster transcription factor FSL7 (496 aa).

The zn(2)-C6 fungal-type DNA-binding region spans 16–46 (CDRCHELKIRCTRTGGTESRCDRCEKNDIDC). 5 disordered regions span residues 57–102 (PKSQ…SINS), 189–224 (RSINHRSGSENESMEGNAELQSTQSASGSPQEEDQM), 281–307 (ANHTSSSSSSNSTTVDGPSEIRNQSRS), 348–379 (GSTSSSTYNDTTAHPSSASLPSQTGGPTKPRT), and 444–470 (MTREQHVSTGHGPDRHTSPVLSSAQAA). Composition is skewed to polar residues over residues 65 to 89 (GPNTTARQNDTTTRGRIQQEQQEQM) and 207 to 218 (ELQSTQSASGSP). Over residues 281–294 (ANHTSSSSSSNSTT) the composition is skewed to low complexity. Over residues 355–379 (YNDTTAHPSSASLPSQTGGPTKPRT) the composition is skewed to polar residues. The span at 444 to 460 (MTREQHVSTGHGPDRHT) shows a compositional bias: basic and acidic residues.

Its subcellular location is the nucleus. In terms of biological role, transcription regulator that specifically up-regulates the gene cluster that mediates the biosynthesis of fusarielins F, G and H, decaketide compounds with 5 methylations and a decaline core that act as mycoestrogens as they stimulate growth of MCF-7 breast cancer cells. Probably binds the 5'-CGGNNNCCG-3' motif present in the promoter of all the cluster genes. This chain is Fusarielin biosynthesis cluster transcription factor FSL7, found in Gibberella zeae (strain ATCC MYA-4620 / CBS 123657 / FGSC 9075 / NRRL 31084 / PH-1) (Wheat head blight fungus).